We begin with the raw amino-acid sequence, 338 residues long: Anthocyanidin reductase ((2S)-flavan-3-ol-forming) (338 aa).

NADP(+)-binding positions include 18-21, lysine 48, 87-90, and tyrosine 168; these read TGFV and VATP.

This sequence belongs to the NAD(P)-dependent epimerase/dehydratase family. Dihydroflavonol-4-reductase subfamily.

It carries out the reaction a (2S,3R)-flavan-3-ol + 2 NADP(+) = an anthocyanidin with a 3-hydroxy group + 2 NADPH + 2 H(+). The enzyme catalyses a (2S,3S)-flavan-3-ol + 2 NADP(+) = an anthocyanidin with a 3-hydroxy group + 2 NADPH + 2 H(+). It participates in secondary metabolite biosynthesis; flavonoid biosynthesis. Its function is as follows. Produces the terminal flavan-3-ol monomers required for the formation of proanthocyanidins or condensed tannins in leaves and flowers, as well as in the skin and seeds of developing berries. Behaves as a reductase and as a C-3 epimerase. Catalyzes the double reduction of anthocyanidins, producing a mixture of (2S,3S)- and (2S,3R)-flavan-3-ols. The enzyme catalyzes sequential hydride transfers to C-2 and C-4, respectively and epimerization at C-3 is achieved by tautomerization that occurs between the two hydride transfers. Converts cyanidin, pelargonidin and delphinidin into catechin and epicatechin, afzelechin and epiafzelechin, and gallocatechin and epigallocatechin respectively. This Vitis vinifera (Grape) protein is Anthocyanidin reductase ((2S)-flavan-3-ol-forming).